A 1118-amino-acid chain; its full sequence is Phytochrome 1 (1118 aa).

Low complexity predominate over residues 1–10; that stretch reads MSSTRHSYSS. The segment at 1-23 is disordered; that stretch reads MSSTRHSYSSGGSGKSKHGRRIA. Residues 212–391 form the GAF domain; it reads DIGLLCDSVV…VFSLQLNMEV (180 aa). Phytochromobilin is bound at residue Cys-317. PAS domains are found at residues 606-677 and 740-811; these read VASE…LEGE and DYKA…TKLM. One can recognise a Histidine kinase domain in the interval 887-1110; it reads YVKEELKKPL…LVTIQFPLAH (224 aa).

Belongs to the phytochrome family. In terms of assembly, homodimer. Post-translationally, contains one covalently linked phytochromobilin chromophore.

Functionally, regulatory photoreceptor which exists in two forms that are reversibly interconvertible by light: the Pr form that absorbs maximally in the red region of the spectrum and the Pfr form that absorbs maximally in the far-red region. Photoconversion of Pr to Pfr induces an array of morphogenic responses, whereas reconversion of Pfr to Pr cancels the induction of those responses. Pfr controls the expression of a number of nuclear genes including those encoding the small subunit of ribulose-bisphosphate carboxylase, chlorophyll A/B binding protein, protochlorophyllide reductase, rRNA, etc. It also controls the expression of its own gene(s) in a negative feedback fashion. The sequence is that of Phytochrome 1 (PHY1) from Adiantum capillus-veneris (Maidenhair fern).